The sequence spans 226 residues: UPF0173 metal-dependent hydrolase CHY_0920 (226 aa).

Belongs to the UPF0173 family.

This chain is UPF0173 metal-dependent hydrolase CHY_0920, found in Carboxydothermus hydrogenoformans (strain ATCC BAA-161 / DSM 6008 / Z-2901).